Here is a 94-residue protein sequence, read N- to C-terminus: Prepro-gonadotropin-releasing hormone-like protein (94 aa).

Positions 1 to 21 (MNACILLTTLVTMITIEKVQG) are cleaved as a signal peptide.

Its subcellular location is the secreted. In terms of biological role, neuropeptide involved in reproduction. May be an important hormone in the regulation of gonadal maturation. The protein is Prepro-gonadotropin-releasing hormone-like protein of Ruditapes philippinarum (Japanese carpet shell).